A 316-amino-acid chain; its full sequence is Transaldolase (316 aa).

Lysine 132 serves as the catalytic Schiff-base intermediate with substrate.

It belongs to the transaldolase family. Type 1 subfamily.

The protein localises to the cytoplasm. The enzyme catalyses D-sedoheptulose 7-phosphate + D-glyceraldehyde 3-phosphate = D-erythrose 4-phosphate + beta-D-fructose 6-phosphate. The protein operates within carbohydrate degradation; pentose phosphate pathway; D-glyceraldehyde 3-phosphate and beta-D-fructose 6-phosphate from D-ribose 5-phosphate and D-xylulose 5-phosphate (non-oxidative stage): step 2/3. Transaldolase is important for the balance of metabolites in the pentose-phosphate pathway. This is Transaldolase from Vibrio cholerae serotype O1 (strain ATCC 39315 / El Tor Inaba N16961).